We begin with the raw amino-acid sequence, 129 residues long: Small ribosomal subunit protein uS11 (129 aa).

It belongs to the universal ribosomal protein uS11 family. In terms of assembly, part of the 30S ribosomal subunit. Interacts with proteins S7 and S18. Binds to IF-3.

Functionally, located on the platform of the 30S subunit, it bridges several disparate RNA helices of the 16S rRNA. Forms part of the Shine-Dalgarno cleft in the 70S ribosome. This chain is Small ribosomal subunit protein uS11, found in Bacillus cereus (strain ATCC 14579 / DSM 31 / CCUG 7414 / JCM 2152 / NBRC 15305 / NCIMB 9373 / NCTC 2599 / NRRL B-3711).